We begin with the raw amino-acid sequence, 899 residues long: Periodic tryptophan protein 2 homolog (899 aa).

WD repeat units lie at residues 9-52 (NLLG…TLPF), 53-92 (SHRK…VLYH), 94-132 (SFKA…DANA), 149-188 (QHFD…GFTP), 193-232 (GHRQ…GQDE), 252-291 (QNSA…MIHT), 294-334 (ISQN…YILK), 337-376 (GHFD…CIVT), 379-418 (EHTS…NFRT), 422-464 (PERL…DRLS), 465-504 (GHEG…QTSE), 507-546 (QLNS…QQAG), and 569-608 (AGTK…LLKK). A disordered region spans residues 639–668 (DEQGEASDFEDRIDRSLPGSKRGDPSARRK). Positions 647–668 (FEDRIDRSLPGSKRGDPSARRK) are enriched in basic and acidic residues. A WD 14 repeat occupies 669–709 (NPEVRVNGVAFSPNGSAFCAASTEGLLIYSLDTTIQFDPFD). Positions 866 to 899 (TGSDEQPGAGGMSLNDVMQQDEGNASEDEWIGLV) are disordered. Positions 889–899 (NASEDEWIGLV) are enriched in acidic residues.

It belongs to the WD repeat PWP2 family.

This is Periodic tryptophan protein 2 homolog from Neurospora crassa (strain ATCC 24698 / 74-OR23-1A / CBS 708.71 / DSM 1257 / FGSC 987).